Here is a 25-residue protein sequence, read N- to C-terminus: Hemocyanin subunit 2 (25 aa).

It belongs to the tyrosinase family. Hemocyanin subfamily. As to expression, hemolymph.

The protein localises to the secreted. It localises to the extracellular space. Its function is as follows. Hemocyanins are copper-containing oxygen carriers occurring freely dissolved in the hemolymph of many mollusks and arthropods. The sequence is that of Hemocyanin subunit 2 from Carcinus maenas (Common shore crab).